An 82-amino-acid chain; its full sequence is Small ribosomal subunit protein uS17 (82 aa).

The protein belongs to the universal ribosomal protein uS17 family. Part of the 30S ribosomal subunit.

In terms of biological role, one of the primary rRNA binding proteins, it binds specifically to the 5'-end of 16S ribosomal RNA. This is Small ribosomal subunit protein uS17 from Shewanella pealeana (strain ATCC 700345 / ANG-SQ1).